Consider the following 39-residue polypeptide: Protein disulfide-isomerase A3 (39 aa).

It belongs to the protein disulfide isomerase family. Part of the major histocompatibility complex class I (MHC I) peptide loading complex composed of TAP1, TAP2, B2M, MHC heavy chain, TAPBP, PDIA3, and CALR. Interacts with ERP27 and CANX. Interacts with SERPINA2 and with SERPINA1. Interacts with ATP2A2. Post-translationally, within the major histocompatibility complex class I (MHC I) peptide loading complex forms reversible disulfide-linked heterodimers with TAPBP as part of its protein folding chaperone activity. This is essential to assist the dynamic assembly of the MHC I complex with high affinity antigens in the endoplasmic reticulum. Phosphorylated. As to expression, predominantly expressed in liver. Low in brain, testis and colon. Not detectable in pancreas and skeletal muscle.

It localises to the endoplasmic reticulum. It is found in the endoplasmic reticulum lumen. Its subcellular location is the melanosome. It catalyses the reaction Catalyzes the rearrangement of -S-S- bonds in proteins.. Functionally, protein disulfide isomerase that catalyzes the formation, isomerization, and reduction or oxidation of disulfide bonds in client proteins and functions as a protein folding chaperone. Core component of the major histocompatibility complex class I (MHC I) peptide loading complex where it functions as an essential folding chaperone for TAPBP. Through TAPBP, assists the dynamic assembly of the MHC I complex with high affinity antigens in the endoplasmic reticulum. Therefore, plays a crucial role in the presentation of antigens to cytotoxic T cells in adaptive immunity. The chain is Protein disulfide-isomerase A3 (PDIA3) from Papio hamadryas (Hamadryas baboon).